The sequence spans 264 residues: H-2 class II histocompatibility antigen, I-A beta chain (264 aa).

A signal peptide spans 1–31 (MVWLPRVPCVAAVILLLTVLSPPVALVRDSR). Positions 32–121 (PWFLEYCKSE…IFDNFLVPRR (90 aa)) are beta-1. Residues 32–225 (PWFLEYCKSE…KAQSTSAQNK (194 aa)) are Extracellular-facing. Intrachain disulfides connect Cys-42-Cys-106 and Cys-144-Cys-200. Asn-46 carries an N-linked (GlcNAc...) asparagine glycan. The interval 122–215 (VEPTVTVYPT…SLTDPVTVEW (94 aa)) is beta-2. Residues 124–214 (PTVTVYPTKT…PSLTDPVTVE (91 aa)) enclose the Ig-like C1-type domain. Positions 216–225 (KAQSTSAQNK) are connecting peptide. Residues 226-248 (MLSGVGGFVLGLLFLRAGLFIYF) form a helical membrane-spanning segment. Over 249–264 (RNQKGQSGLQPTGLLS) the chain is Cytoplasmic.

The protein belongs to the MHC class II family. Ubiquitinated in immature dendritic cells leading to down-regulation of MHC class II.

The protein resides in the membrane. The sequence is that of H-2 class II histocompatibility antigen, I-A beta chain (H2-Eb1) from Mus musculus (Mouse).